The sequence spans 639 residues: MESDATTSEPKASVGSDSSPAEQTVLATLRDSVAAPTRGFMSPVRSVVASPRPVKGKAARRRLQLPPVTQAETCDEEPVPAVPEDQEEAQPLPPIYASPMRGMWRSEKVALYCDQVLQGSKAEDAEEAMSRYLLEKLKAKDRWLGVWKSNPELFFEKYEEASIPFVGILVEVTCKPRQNLSSCFKVTVSVAEPFSSNIANIPRDLVDEVLGELEYSAPLLEVYPVDGQDADVRDIALALEVVRFFYDFLWRDWDDEENCENYTALIEERINLWCDIQDGTIPGPIAQRFKKTLEKYKNKRVELIEYQSNIKEDPSAAEAVECWKKYYEIVMLCGLLKMWEDLRLRVHGPFFPRILRRRKGKRDFGKTITHIVAKVMTTDMVKNLSSDTLLQQHNDLNLALDSCYSGDIVVIFPGEYQASNLALLTDDITIKGVGKREEIMITSEPSHDSFVVSKADNVKLMQLSLIQQGTVDGIVVVESGHLTLENCLLKCEGTGVCVLTGASLTITNSEITGAQGAGVELYPGSIAILEGNEIHHCNNLRTSDSSKSTLGGVNMKVLPAPKLKMTNNHIYNNNGYGVSILQPSEQFFIVAEAALNKGAASGDKKDDKMLSKVMQTLNVEMNNNRIEANLKGDIRIVTG.

Disordered regions lie at residues 1 to 25 (MESD…EQTV) and 48 to 75 (VASP…ETCD). An O-acetylserine modification is found at serine 3. Residues serine 8, serine 19, and serine 50 each carry the phosphoserine modification. Over residues 54 to 63 (VKGKAARRRL) the composition is skewed to basic residues. The stretch at 285–312 (IAQRFKKTLEKYKNKRVELIEYQSNIKE) forms a coiled coil. 4 PbH1 repeats span residues 479 to 500 (SGHL…CVLT), 501 to 523 (GASL…ELYP), 524 to 557 (GSIA…NMKV), and 560 to 582 (APKL…SILQ). The residue at position 556 (lysine 556) is an N6-acetyllysine. Lysine 631 is modified (N6-acetyllysine).

In terms of assembly, interacts with HSPA2; this interaction may promote the recruitment of HSPA2 to the spindle. In terms of tissue distribution, expressed in pachytene spermatocytes and elongating spermatids inside the seminiferous tubules. Not detected in ovary (at protein level). Testis-specific.

The protein localises to the cytoplasm. It localises to the cytoskeleton. Its subcellular location is the spindle. Its function is as follows. Testis-specific spindle-associated factor that plays a role in spermatogenesis. In association with HSPA2, participates in the maintenance of spindle integrity during meiosis in male germ cells. The polypeptide is Testicular spindle-associated protein SHCBP1L (Mus musculus (Mouse)).